Reading from the N-terminus, the 376-residue chain is MVGSRTSPIFNALRVELNAREAELVEIPLIQPADPFLDMAGEDLRRRIFLTENENGDSLCLRPEFTIPVCRNHIALNAATPKRYAYLGEVFRQRRDGAAEFLQAGIEDLGAADEAASDARSLADALSCVKAIAPDAPLEIVLGDQSVFAGMLKALGLPQGWRKKLLRSFGDAHSMDLALAELTGTQRRDPLPESLAVLVAEGDEIGLARMLEAEMLEAGISPGAGRTPVEIARRLIEKEDLAATHFPAAALDLLRQFLAIRVSLDTAAVTLRAFAADNALDLGAVLQKFEARADAIAQAGIEMKDIIYDASFGRPLDYYTGLVYEIRDASNRQDGVLAGGGRYDRLLTMLGACEAIPGVGFSIWLDRLQALAGEKQ.

The protein belongs to the class-II aminoacyl-tRNA synthetase family. HisZ subfamily. As to quaternary structure, heteromultimer composed of HisG and HisZ subunits.

The protein resides in the cytoplasm. It functions in the pathway amino-acid biosynthesis; L-histidine biosynthesis; L-histidine from 5-phospho-alpha-D-ribose 1-diphosphate: step 1/9. Functionally, required for the first step of histidine biosynthesis. May allow the feedback regulation of ATP phosphoribosyltransferase activity by histidine. This is ATP phosphoribosyltransferase regulatory subunit from Brucella canis (strain ATCC 23365 / NCTC 10854 / RM-666).